Here is a 233-residue protein sequence, read N- to C-terminus: Hydroxyacylglutathione hydrolase (233 aa).

Residues H52, H54, D56, H57, H108, D125, and H163 each coordinate Zn(2+).

This sequence belongs to the metallo-beta-lactamase superfamily. Glyoxalase II family. As to quaternary structure, monomer. Zn(2+) serves as cofactor.

It catalyses the reaction an S-(2-hydroxyacyl)glutathione + H2O = a 2-hydroxy carboxylate + glutathione + H(+). It functions in the pathway secondary metabolite metabolism; methylglyoxal degradation; (R)-lactate from methylglyoxal: step 2/2. Thiolesterase that catalyzes the hydrolysis of S-D-lactoyl-glutathione to form glutathione and D-lactic acid. The polypeptide is Hydroxyacylglutathione hydrolase (Actinobacillus succinogenes (strain ATCC 55618 / DSM 22257 / CCUG 43843 / 130Z)).